The sequence spans 184 residues: Flagellar transcriptional regulator FlhC (184 aa).

Zn(2+)-binding residues include cysteine 144, cysteine 147, cysteine 163, and cysteine 166.

Belongs to the FlhC family. As to quaternary structure, heterohexamer composed of two FlhC and four FlhD subunits. Each FlhC binds a FlhD dimer, forming a heterotrimer, and a hexamer assembles by dimerization of two heterotrimers. The cofactor is Zn(2+).

The protein localises to the cytoplasm. In terms of biological role, functions in complex with FlhD as a master transcriptional regulator that regulates transcription of several flagellar and non-flagellar operons by binding to their promoter region. Activates expression of class 2 flagellar genes, including fliA, which is a flagellum-specific sigma factor that turns on the class 3 genes. Also regulates genes whose products function in a variety of physiological pathways. The protein is Flagellar transcriptional regulator FlhC of Verminephrobacter eiseniae (strain EF01-2).